The sequence spans 351 residues: UDP-N-acetylglucosamine transporter slc35b4 (351 aa).

A run of 10 helical transmembrane segments spans residues 6 to 26 (LISL…VISL), 37 to 57 (AILV…FVNI), 77 to 97 (IPLK…VLNN), 104 to 124 (IPIP…IVIG), 136 to 156 (QILS…SSMP), 173 to 193 (FSIG…LGLI), 209 to 229 (TIFY…DDIL), 252 to 274 (TLWV…VFIL), 282 to 302 (TCTL…VIYF), and 306 to 326 (FTSL…MYST).

It belongs to the nucleotide-sugar transporter family. SLC35B subfamily.

It is found in the golgi apparatus membrane. Functionally, sugar transporter that specifically mediates the transport of UDP-N-acetylglucosamine (UDP-GlcNAc) from cytosol into Golgi. The protein is UDP-N-acetylglucosamine transporter slc35b4 (slc35b4) of Dictyostelium discoideum (Social amoeba).